The primary structure comprises 356 residues: D-alanine--D-alanine ligase (356 aa).

The ATP-grasp domain occupies 134–339; the sequence is KQLFEHRGLP…YPELITKLIE (206 aa). 167–222 contacts ATP; the sequence is NDKLNYPVFVKPANLGSSVGISKCNNEAELKEGIKEAFQFDRKLVIEQGVNAREIE. Residues aspartate 293, glutamate 306, and asparagine 308 each coordinate Mg(2+).

It belongs to the D-alanine--D-alanine ligase family. Mg(2+) serves as cofactor. Requires Mn(2+) as cofactor.

Its subcellular location is the cytoplasm. The catalysed reaction is 2 D-alanine + ATP = D-alanyl-D-alanine + ADP + phosphate + H(+). Its pathway is cell wall biogenesis; peptidoglycan biosynthesis. Its function is as follows. Cell wall formation. This chain is D-alanine--D-alanine ligase, found in Staphylococcus aureus (strain Mu3 / ATCC 700698).